Here is a 120-residue protein sequence, read N- to C-terminus: Large ribosomal subunit protein bL12 (120 aa).

This sequence belongs to the bacterial ribosomal protein bL12 family. Homodimer. Part of the ribosomal stalk of the 50S ribosomal subunit. Forms a multimeric L10(L12)X complex, where L10 forms an elongated spine to which 2 to 4 L12 dimers bind in a sequential fashion. Binds GTP-bound translation factors.

In terms of biological role, forms part of the ribosomal stalk which helps the ribosome interact with GTP-bound translation factors. Is thus essential for accurate translation. The protein is Large ribosomal subunit protein bL12 of Listeria innocua serovar 6a (strain ATCC BAA-680 / CLIP 11262).